We begin with the raw amino-acid sequence, 179 residues long: Inner membrane-spanning protein YciB (179 aa).

Transmembrane regions (helical) follow at residues 22–42 (IYAA…YSWV), 50–70 (MALI…FFHN), 76–96 (WKVT…QWVM), 121–141 (LAWA…AFWL), and 149–169 (FKVF…GIYI).

It belongs to the YciB family.

The protein localises to the cell inner membrane. Its function is as follows. Plays a role in cell envelope biogenesis, maintenance of cell envelope integrity and membrane homeostasis. The chain is Inner membrane-spanning protein YciB from Escherichia coli O127:H6 (strain E2348/69 / EPEC).